The primary structure comprises 173 residues: Transcription factor E (173 aa).

Residues 9–92 (NNPATRAYIH…LWQLRIDLLY (84 aa)) enclose the HTH TFE/IIEalpha-type domain.

Belongs to the TFE family. As to quaternary structure, monomer. Interaction with RNA polymerase subunits RpoF and RpoE is necessary for Tfe stimulatory transcription activity. Able to interact with Tbp and RNA polymerase in the absence of DNA promoter. Interacts both with the preinitiation and elongation complexes.

Transcription factor that plays a role in the activation of archaeal genes transcribed by RNA polymerase. Facilitates transcription initiation by enhancing TATA-box recognition by TATA-box-binding protein (Tbp), and transcription factor B (Tfb) and RNA polymerase recruitment. Not absolutely required for transcription in vitro, but particularly important in cases where Tbp or Tfb function is not optimal. It dynamically alters the nucleic acid-binding properties of RNA polymerases by stabilizing the initiation complex and destabilizing elongation complexes. Seems to translocate with the RNA polymerase following initiation and acts by binding to the non template strand of the transcription bubble in elongation complexes. This chain is Transcription factor E, found in Methanoregula boonei (strain DSM 21154 / JCM 14090 / 6A8).